A 386-amino-acid chain; its full sequence is tRNA-specific adenosine deaminase subunit tad2 (386 aa).

In terms of domain architecture, CMP/dCMP-type deaminase spans 212 to 322 (TQHETYMKLA…GNDRFGGCGS (111 aa)). A Zn(2+)-binding site is contributed by H263. E265 (proton donor) is an active-site residue. C293 and C296 together coordinate Zn(2+).

This sequence belongs to the cytidine and deoxycytidylate deaminase family. ADAT2 subfamily. As to quaternary structure, heterodimer with Tad3. It depends on Zn(2+) as a cofactor.

It carries out the reaction adenosine(34) in tRNA + H2O + H(+) = inosine(34) in tRNA + NH4(+). In terms of biological role, structural subunit of tRNA-specific adenosine deaminase, which deaminates adenosine-34 (the first, also called wobble position of the anticodon) to inosine in many tRNAs. Inosine-34 allows the decoding of 3 different nucleotides at the third position of mRNA codons, as inosine is able to pair with U, C, and A. The wobble inosine tRNA modification is essential for cell cycle progression in the G1/S and G2/M transitions in fission yeast. The chain is tRNA-specific adenosine deaminase subunit tad2 (tad2) from Schizosaccharomyces pombe (strain 972 / ATCC 24843) (Fission yeast).